A 118-amino-acid chain; its full sequence is Large ribosomal subunit protein bL19 (118 aa).

The protein belongs to the bacterial ribosomal protein bL19 family.

This protein is located at the 30S-50S ribosomal subunit interface and may play a role in the structure and function of the aminoacyl-tRNA binding site. The polypeptide is Large ribosomal subunit protein bL19 (Campylobacter jejuni subsp. doylei (strain ATCC BAA-1458 / RM4099 / 269.97)).